The chain runs to 338 residues: GTPase Obg (338 aa).

The region spanning 1–159 (MSFIDEVKIH…RWLRLELKLM (159 aa)) is the Obg domain. The 172-residue stretch at 160–331 (ADVGLLGMPS…LLDEIARNLW (172 aa)) folds into the OBG-type G domain. GTP contacts are provided by residues 166–173 (GMPSVGKS), 191–195 (FTTLK), 213–216 (DIPG), 283–286 (NKID), and 312–314 (SAA). 2 residues coordinate Mg(2+): Ser173 and Thr193.

This sequence belongs to the TRAFAC class OBG-HflX-like GTPase superfamily. OBG GTPase family. As to quaternary structure, monomer. Mg(2+) is required as a cofactor.

It localises to the cytoplasm. In terms of biological role, an essential GTPase which binds GTP, GDP and possibly (p)ppGpp with moderate affinity, with high nucleotide exchange rates and a fairly low GTP hydrolysis rate. Plays a role in control of the cell cycle, stress response, ribosome biogenesis and in those bacteria that undergo differentiation, in morphogenesis control. The protein is GTPase Obg of Geotalea uraniireducens (strain Rf4) (Geobacter uraniireducens).